We begin with the raw amino-acid sequence, 264 residues long: E3 ubiquitin-protein ligase MARCHF8 (264 aa).

The segment at 15 to 47 (LGHSVSRSSNISKAGSPTSVSAPSSFPRTSVTP) is disordered. Residues 17–47 (HSVSRSSNISKAGSPTSVSAPSSFPRTSVTP) are compositionally biased toward polar residues. An RING-CH-type zinc finger spans residues 45–106 (VTPSSQDICR…ELCKFEFIME (62 aa)). Cys53, Cys56, Cys70, Cys72, His80, Cys83, Cys96, and Cys99 together coordinate Zn(2+). The next 2 helical transmembrane spans lie at 130–150 (CSVT…YVLI) and 170–190 (FWTK…FMYV).

The protein resides in the cytoplasmic vesicle membrane. It localises to the lysosome membrane. It is found in the early endosome membrane. The catalysed reaction is S-ubiquitinyl-[E2 ubiquitin-conjugating enzyme]-L-cysteine + [acceptor protein]-L-lysine = [E2 ubiquitin-conjugating enzyme]-L-cysteine + N(6)-ubiquitinyl-[acceptor protein]-L-lysine.. It functions in the pathway protein modification; protein ubiquitination. In terms of biological role, E3 ubiquitin-protein ligase that mediates ubiquitination of cd86 and MHC class II proteins, such as hla-dr alpha and beta, and promotes their subsequent endocytosis and sorting to lysosomes via multivesicular bodies. The protein is E3 ubiquitin-protein ligase MARCHF8 (marchf8) of Xenopus tropicalis (Western clawed frog).